The primary structure comprises 425 residues: E3 ubiquitin-protein ligase TRIM31 (425 aa).

An RING-type zinc finger spans residues 16–57; the sequence is CPICLDILQKPVTIDCGHNFCLKCITQIGETSCGFFKCPLCK. The B box-type zinc finger occupies 90 to 131; the sequence is RKEATCPRHQEMFHYFCEDDGKFLCFVCRESKDHKSHNVSLI. Zn(2+)-binding residues include cysteine 95, histidine 98, cysteine 117, and histidine 123. Coiled coils occupy residues 126–162 and 270–307; these read HNVS…VKAQ and LELE…DENR. A disordered region spans residues 328–360; the sequence is HKMNKTSEPGSSSAGGRTTSGPPNHHSSAPSHS. Residues 336–360 are compositionally biased toward low complexity; the sequence is PGSSSAGGRTTSGPPNHHSSAPSHS.

This sequence belongs to the TRIM/RBCC family. May form oligomers. Interacts with isoform p52shc of SHC1. Auto-ubiquitinated (in vitro). As to expression, up-regulated in gastric adenocarcinomas.

The protein localises to the cytoplasm. The protein resides in the mitochondrion. It carries out the reaction S-ubiquitinyl-[E2 ubiquitin-conjugating enzyme]-L-cysteine + [acceptor protein]-L-lysine = [E2 ubiquitin-conjugating enzyme]-L-cysteine + N(6)-ubiquitinyl-[acceptor protein]-L-lysine.. It functions in the pathway protein modification; protein ubiquitination. In terms of biological role, E3 ubiquitin-protein ligase that acts as a regulator of antiviral immune response and inflammation by mediating ubiquitination of substrates. Acts as a regulator of innate immune defense against viruses by mediating 'Lys-63'-linked ubiquitination of MAVS, promoting MAVS polymerization and formation of three-stranded helical filaments on mitochondria. Acts as a negative regulator of the NLRP3 inflammasome by catalyzing 'Lys-48'-linked ubiquitination of NLRP3, leading to its degradation. Regulator of Src-induced anchorage independent cell growth. This Homo sapiens (Human) protein is E3 ubiquitin-protein ligase TRIM31.